A 455-amino-acid chain; its full sequence is Tubulin alpha chain (455 aa).

8 residues coordinate GTP: glutamine 11, glutamate 77, serine 145, glycine 149, threonine 150, serine 184, asparagine 211, and asparagine 233. A Mg(2+)-binding site is contributed by glutamate 77. Glutamate 259 is a catalytic residue.

Belongs to the tubulin family. Dimer of alpha and beta chains. A typical microtubule is a hollow water-filled tube with an outer diameter of 25 nm and an inner diameter of 15 nM. Alpha-beta heterodimers associate head-to-tail to form protofilaments running lengthwise along the microtubule wall with the beta-tubulin subunit facing the microtubule plus end conferring a structural polarity. Microtubules usually have 13 protofilaments but different protofilament numbers can be found in some organisms and specialized cells. Mg(2+) serves as cofactor.

It is found in the cytoplasm. The protein localises to the cytoskeleton. The catalysed reaction is GTP + H2O = GDP + phosphate + H(+). Tubulin is the major constituent of microtubules, a cylinder consisting of laterally associated linear protofilaments composed of alpha- and beta-tubulin heterodimers. Microtubules grow by the addition of GTP-tubulin dimers to the microtubule end, where a stabilizing cap forms. Below the cap, tubulin dimers are in GDP-bound state, owing to GTPase activity of alpha-tubulin. This is Tubulin alpha chain from Entamoeba histolytica (strain ATCC 30459 / HM-1:IMSS / ABRM).